Consider the following 417-residue polypeptide: Serine hydroxymethyltransferase (417 aa).

(6S)-5,6,7,8-tetrahydrofolate-binding positions include Leu121 and 125 to 127 (GHL). Lys229 carries the N6-(pyridoxal phosphate)lysine modification. 355-357 (SPF) contributes to the (6S)-5,6,7,8-tetrahydrofolate binding site.

This sequence belongs to the SHMT family. As to quaternary structure, homodimer. The cofactor is pyridoxal 5'-phosphate.

Its subcellular location is the cytoplasm. The enzyme catalyses (6R)-5,10-methylene-5,6,7,8-tetrahydrofolate + glycine + H2O = (6S)-5,6,7,8-tetrahydrofolate + L-serine. It participates in one-carbon metabolism; tetrahydrofolate interconversion. Its pathway is amino-acid biosynthesis; glycine biosynthesis; glycine from L-serine: step 1/1. Its function is as follows. Catalyzes the reversible interconversion of serine and glycine with tetrahydrofolate (THF) serving as the one-carbon carrier. This reaction serves as the major source of one-carbon groups required for the biosynthesis of purines, thymidylate, methionine, and other important biomolecules. Also exhibits THF-independent aldolase activity toward beta-hydroxyamino acids, producing glycine and aldehydes, via a retro-aldol mechanism. The chain is Serine hydroxymethyltransferase from Erwinia tasmaniensis (strain DSM 17950 / CFBP 7177 / CIP 109463 / NCPPB 4357 / Et1/99).